The chain runs to 117 residues: Large ribosomal subunit protein bL20 (117 aa).

This sequence belongs to the bacterial ribosomal protein bL20 family.

Binds directly to 23S ribosomal RNA and is necessary for the in vitro assembly process of the 50S ribosomal subunit. It is not involved in the protein synthesizing functions of that subunit. The sequence is that of Large ribosomal subunit protein bL20 from Rickettsia rickettsii (strain Iowa).